A 360-amino-acid polypeptide reads, in one-letter code: Mannose-1-phosphate guanyltransferase beta-A (360 aa).

The protein belongs to the transferase hexapeptide repeat family.

The enzyme catalyses alpha-D-mannose 1-phosphate + GTP + H(+) = GDP-alpha-D-mannose + diphosphate. Its pathway is nucleotide-sugar biosynthesis; GDP-alpha-D-mannose biosynthesis; GDP-alpha-D-mannose from alpha-D-mannose 1-phosphate (GTP route): step 1/1. This Xenopus laevis (African clawed frog) protein is Mannose-1-phosphate guanyltransferase beta-A (gmppb-a).